A 208-amino-acid polypeptide reads, in one-letter code: Ribosomal RNA large subunit methyltransferase E (208 aa).

Positions 61, 63, 81, 97, and 122 each coordinate S-adenosyl-L-methionine. Lys162 functions as the Proton acceptor in the catalytic mechanism.

The protein belongs to the class I-like SAM-binding methyltransferase superfamily. RNA methyltransferase RlmE family.

The protein localises to the cytoplasm. The catalysed reaction is uridine(2552) in 23S rRNA + S-adenosyl-L-methionine = 2'-O-methyluridine(2552) in 23S rRNA + S-adenosyl-L-homocysteine + H(+). Specifically methylates the uridine in position 2552 of 23S rRNA at the 2'-O position of the ribose in the fully assembled 50S ribosomal subunit. The polypeptide is Ribosomal RNA large subunit methyltransferase E (Pseudomonas putida (strain W619)).